Reading from the N-terminus, the 760-residue chain is Transmembrane channel-like protein 1 (760 aa).

The disordered stretch occupies residues Met-1–Glu-80. The Cytoplasmic segment spans residues Met-1–Gly-182. Residues Lys-13–Glu-29 are compositionally biased toward acidic residues. Residues Asp-30–Arg-39 are compositionally biased toward basic and acidic residues. Residue Ser-37 is modified to Phosphoserine. Thr-45 is modified (phosphothreonine). The span at Asn-50–Glu-61 shows a compositional bias: acidic residues. Ser-128 carries the phosphoserine modification. A helical transmembrane segment spans residues Ser-183–Pro-220. Residues Tyr-221–Phe-271 lie on the Extracellular side of the membrane. A helical transmembrane segment spans residues Arg-272–Asp-303. Over Gly-304–His-359 the chain is Cytoplasmic. Ser-314 carries the post-translational modification Phosphoserine. Residues Leu-360–Ser-390 traverse the membrane as a helical segment. Topologically, residues Gln-391–Gly-402 are extracellular. Thr-400 is modified (phosphothreonine). A helical transmembrane segment spans residues Trp-403 to Leu-430. The Cytoplasmic portion of the chain corresponds to Glu-431 to His-434. The chain crosses the membrane as a helical span at residues Pro-435 to Ile-469. The Extracellular portion of the chain corresponds to Glu-470–Cys-515. A helical transmembrane segment spans residues Trp-516 to Cys-553. Residues Asn-554–Asp-572 lie on the Cytoplasmic side of the membrane. Residues Ile-573–Phe-593 form a helical membrane-spanning segment. The Extracellular segment spans residues Ala-594–Ser-596. Residues Leu-597–Cys-619 traverse the membrane as a helical segment. Residues Asn-620–Asn-633 are Cytoplasmic-facing. The chain crosses the membrane as a helical span at residues Asn-634 to Ser-657. Over Leu-658–Gly-700 the chain is Extracellular. The chain crosses the membrane as a helical span at residues Leu-701–Met-734. Residues Lys-735 to Gln-760 are Cytoplasmic-facing.

It belongs to the TMC family. Forms the MET channel complosed of TMC dimer (TMC1 or TMC2), TMIE, TOMT, CIB (CIB2 or CIB3), LHFPL5 and PDH15. The interaction of TMC1 and TMC2 with TOMT is required for the transportation of TMC1/2 into the stereocilia of hair cells. Interacts (via N-terminus) with both isoforms CD1 and CD3 of PCDH15. Can form a heterodimer with TMC2, TMC5 or TMC7. In terms of tissue distribution, detected in fetal cochlea, and at low levels in placenta and testis.

It is found in the cell membrane. The catalysed reaction is Ca(2+)(in) = Ca(2+)(out). Functionally, pore-forming subunit of the mechanotransducer (MET) non-selective cation channel complex located at the tips of stereocilia of cochlear hair cells and that mediates sensory transduction in the auditory system. The MET complex is composed of two dimeric pore-forming ion-conducting transmembrane TMC (TMC1 or TMC2) subunits, and aided by several auxiliary proteins including LHFPL5, TMIE, CIB2/3 and TOMT, and the tip-link PCDH15. MET channel is activated by tension in the tip-link extending from the side wall of one stereocilium to the tip of the adjacent shorter stereocilium, where the channel is located. TMC1 MET channel is highly permeable to calcium and likely transports monovalent cations. Also involved in vestibular hair cells transduction current. This chain is Transmembrane channel-like protein 1, found in Homo sapiens (Human).